Here is a 321-residue protein sequence, read N- to C-terminus: MKIATFSVLLLLLFIFPVALAQLKFKFYSESCPNAETIVENLVRQQFARDPSITAALTRMHFHDCFVQGCDASLLIDPTTSQLSEKNAGPNFSVRGFELIDEIKTALEAQCPSTVSCSDIVTLATRDAVFLGGGPSYVVPTGRRDGFVSNPEDANEILPPPFISVEGMLSFFGNKGMNVFDSVALLGAHTVGIASCGNFVDRVTNFQGTGLPDPSMDPTLAGRLRNTCAVPGGFAALDQSMPVTPVSFDNLFFGQIRERKGILLIDQLIASDPATSGVVLQYASNNELFKRQFAIAMVKMGAVDVLTGSAGEIRTNCRAFN.

Residues 1–21 (MKIATFSVLLLLLFIFPVALA) form the signal peptide. Disulfide bonds link cysteine 32/cysteine 111, cysteine 65/cysteine 70, cysteine 117/cysteine 317, and cysteine 196/cysteine 228. The Proton acceptor role is filled by histidine 63. Ca(2+) contacts are provided by aspartate 64, valine 67, glycine 69, aspartate 71, and serine 73. Substrate is bound at residue proline 159. Histidine 189 is a binding site for heme b. Threonine 190 is a Ca(2+) binding site. Ca(2+) contacts are provided by aspartate 238, threonine 244, and aspartate 249.

The protein belongs to the peroxidase family. Classical plant (class III) peroxidase subfamily. Heme b serves as cofactor. The cofactor is Ca(2+).

The protein localises to the secreted. The enzyme catalyses 2 a phenolic donor + H2O2 = 2 a phenolic radical donor + 2 H2O. Removal of H(2)O(2), oxidation of toxic reductants, biosynthesis and degradation of lignin, suberization, auxin catabolism, response to environmental stresses such as wounding, pathogen attack and oxidative stress. These functions might be dependent on each isozyme/isoform in each plant tissue. The chain is Peroxidase 28 (PER28) from Arabidopsis thaliana (Mouse-ear cress).